A 136-amino-acid chain; its full sequence is MPARRKARKRALDVLFEADLRGRPPVEVLAGYVERIEKPRPEHLGYAVGLVEGVAARLDRVDELIASYAEGWTLDRMPTVDRNLARIAVYELLYVDEIDDAVAISEAVELARQMSTDDSPRFLNGLLGRIAEYATR.

This sequence belongs to the NusB family.

Its function is as follows. Involved in transcription antitermination. Required for transcription of ribosomal RNA (rRNA) genes. Binds specifically to the boxA antiterminator sequence of the ribosomal RNA (rrn) operons. This Salinispora tropica (strain ATCC BAA-916 / DSM 44818 / JCM 13857 / NBRC 105044 / CNB-440) protein is Transcription antitermination protein NusB.